A 226-amino-acid chain; its full sequence is Ribosome-recycling factor, mitochondrial (226 aa).

Belongs to the RRF family.

It is found in the mitochondrion. Necessary for protein synthesis in mitochondria. Functions as a ribosome recycling factor in mitochondria. This is Ribosome-recycling factor, mitochondrial (RRF1) from Eremothecium gossypii (strain ATCC 10895 / CBS 109.51 / FGSC 9923 / NRRL Y-1056) (Yeast).